Reading from the N-terminus, the 271-residue chain is Type III pantothenate kinase (271 aa).

6–13 (DVRNTHTV) provides a ligand contact to ATP. 109–112 (GADR) lines the substrate pocket. The Proton acceptor role is filled by Asp-111. Asp-131 serves as a coordination point for K(+). Position 134 (Ser-134) interacts with ATP. Thr-186 contributes to the substrate binding site.

Belongs to the type III pantothenate kinase family. In terms of assembly, homodimer. NH4(+) is required as a cofactor. Requires K(+) as cofactor.

It localises to the cytoplasm. It carries out the reaction (R)-pantothenate + ATP = (R)-4'-phosphopantothenate + ADP + H(+). Its pathway is cofactor biosynthesis; coenzyme A biosynthesis; CoA from (R)-pantothenate: step 1/5. In terms of biological role, catalyzes the phosphorylation of pantothenate (Pan), the first step in CoA biosynthesis. The chain is Type III pantothenate kinase from Mycolicibacterium vanbaalenii (strain DSM 7251 / JCM 13017 / BCRC 16820 / KCTC 9966 / NRRL B-24157 / PYR-1) (Mycobacterium vanbaalenii).